The sequence spans 116 residues: Probable early E4 11 kDa protein (116 aa).

This is Probable early E4 11 kDa protein from Human adenovirus A serotype 12 (HAdV-12).